The sequence spans 860 residues: Tetratricopeptide repeat protein 13 (860 aa).

7 TPR repeats span residues 143-176, 216-248, 249-282, 284-316, 317-350, 352-384, and 386-418; these read TNEE…EPDL, PEVF…LQPS, ARLY…NKNQ, IAML…KVDF, IDAY…NQNH, QTLQ…EPYN, and VCQY…DPLP.

This chain is Tetratricopeptide repeat protein 13 (TTC13), found in Homo sapiens (Human).